Consider the following 415-residue polypeptide: Protein fuzzy homolog (415 aa).

It belongs to the fuzzy family. Component of the CPLANE (ciliogenesis and planar polarity effectors) complex, composed of INTU, FUZ and WDPCP. Interacts with CPLANE1. Interacts with CPLANE2. Expressed in dermal and epidermal cells.

Its subcellular location is the cytoplasm. It localises to the cytoskeleton. The protein resides in the cilium basal body. Probable planar cell polarity effector involved in cilium biogenesis. May regulate protein and membrane transport to the cilium. Proposed to function as core component of the CPLANE (ciliogenesis and planar polarity effectors) complex involved in the recruitment of peripheral IFT-A proteins to basal bodies. May regulate the morphogenesis of hair follicles which depends on functional primary cilia. Binds phosphatidylinositol 3-phosphate with highest affinity, followed by phosphatidylinositol 4-phosphate and phosphatidylinositol 5-phosphate. In Mus musculus (Mouse), this protein is Protein fuzzy homolog (Fuz).